Consider the following 969-residue polypeptide: Leucine--tRNA ligase (969 aa).

The short motif at 46-56 is the 'HIGH' region element; it reads PYLNGVLHAGH. The 'KMSKS' region signature appears at 658–662; the sequence is KLSKS. Lys661 contributes to the ATP binding site.

The protein belongs to the class-I aminoacyl-tRNA synthetase family.

It localises to the cytoplasm. The enzyme catalyses tRNA(Leu) + L-leucine + ATP = L-leucyl-tRNA(Leu) + AMP + diphosphate. In Methanococcus aeolicus (strain ATCC BAA-1280 / DSM 17508 / OCM 812 / Nankai-3), this protein is Leucine--tRNA ligase.